We begin with the raw amino-acid sequence, 422 residues long: Fasciclin-like arabinogalactan protein 10 (422 aa).

Residues 1-25 (MATSRAFTLFAFTLSLLTVASTVSG) form the signal peptide. FAS1 domains follow at residues 26 to 172 (HNIT…NAPI) and 187 to 327 (GVSN…DNVL). N-linked (GlcNAc...) asparagine glycans are attached at residues Asn-27, Asn-128, Asn-162, Asn-190, and Asn-244. Positions 336–397 (SSSPAPAPEP…PTSSENSNAK (62 aa)) are disordered. A compositionally biased stretch (pro residues) spans 340–374 (APAPEPVSAPTPTPAKSPSPVEAPSPTAASPPAPP). The span at 386-397 (DSPTSSENSNAK) shows a compositional bias: polar residues. Residue Asn-398 is the site of GPI-anchor amidated asparagine attachment. Positions 399-422 (AAFHVNAPALFTALVTIAATSLLL) are cleaved as a propeptide — removed in mature form.

It belongs to the fasciclin-like AGP family.

It is found in the cell membrane. In terms of biological role, may be a cell surface adhesion protein. This is Fasciclin-like arabinogalactan protein 10 (FLA10) from Arabidopsis thaliana (Mouse-ear cress).